The chain runs to 224 residues: UPF0758 protein VP0184 (224 aa).

The MPN domain maps to 102 to 224 (ALTSPEQTKL…SVSFAERGWI (123 aa)). Zn(2+) contacts are provided by histidine 173, histidine 175, and aspartate 186. A JAMM motif motif is present at residues 173-186 (HNHPSGVAEPSQAD).

Belongs to the UPF0758 family.

The protein is UPF0758 protein VP0184 of Vibrio parahaemolyticus serotype O3:K6 (strain RIMD 2210633).